The primary structure comprises 124 residues: Small ribosomal subunit protein uS12 (124 aa).

The tract at residues 1–42 is disordered; sequence MPTIQQLVRKGRRPKVNKTKSPALRGNPQQRGVCSRVYTTTP. A compositionally biased stretch (basic residues) spans 9–18; it reads RKGRRPKVNK. The span at 27–42 shows a compositional bias: polar residues; sequence NPQQRGVCSRVYTTTP. Asp-89 is modified (3-methylthioaspartic acid).

Belongs to the universal ribosomal protein uS12 family. Part of the 30S ribosomal subunit. Contacts proteins S8 and S17. May interact with IF1 in the 30S initiation complex.

With S4 and S5 plays an important role in translational accuracy. Its function is as follows. Interacts with and stabilizes bases of the 16S rRNA that are involved in tRNA selection in the A site and with the mRNA backbone. Located at the interface of the 30S and 50S subunits, it traverses the body of the 30S subunit contacting proteins on the other side and probably holding the rRNA structure together. The combined cluster of proteins S8, S12 and S17 appears to hold together the shoulder and platform of the 30S subunit. The polypeptide is Small ribosomal subunit protein uS12 (Tropheryma whipplei (strain TW08/27) (Whipple's bacillus)).